Consider the following 128-residue polypeptide: Serum amyloid A-4 protein (128 aa).

Positions 1 to 18 (MKLFIGLIFCSLVMGVSS) are cleaved as a signal peptide. The tract at residues 93-128 (SSEREEDQVSNRRAEEWGRSGQDPDHFRPAGLPKKY) is disordered. Residues 99–120 (DQVSNRRAEEWGRSGQDPDHFR) show a composition bias toward basic and acidic residues.

Belongs to the SAA family. As to quaternary structure, apolipoprotein of the HDL complex.

The protein resides in the secreted. Its function is as follows. Major acute phase reactant. The polypeptide is Serum amyloid A-4 protein (Sus scrofa (Pig)).